The chain runs to 447 residues: Cobyrinate a,c-diamide synthase (447 aa).

The region spanning lysine 252–tyrosine 439 is the GATase cobBQ-type domain. The active-site Nucleophile is the cysteine 331.

The protein belongs to the CobB/CbiA family. Mg(2+) serves as cofactor.

It carries out the reaction cob(II)yrinate + 2 L-glutamine + 2 ATP + 2 H2O = cob(II)yrinate a,c diamide + 2 L-glutamate + 2 ADP + 2 phosphate + 2 H(+). It catalyses the reaction Ni-sirohydrochlorin + 2 L-glutamine + 2 ATP + 2 H2O = Ni-sirohydrochlorin a,c-diamide + 2 L-glutamate + 2 ADP + 2 phosphate + 2 H(+). The protein operates within cofactor biosynthesis; adenosylcobalamin biosynthesis; cob(II)yrinate a,c-diamide from sirohydrochlorin (anaerobic route): step 10/10. Catalyzes the ATP-dependent amidation of the two carboxylate groups at positions a and c of cobyrinate, using either L-glutamine or ammonia as the nitrogen source. Involved in the biosynthesis of the unique nickel-containing tetrapyrrole coenzyme F430, the prosthetic group of methyl-coenzyme M reductase (MCR), which plays a key role in methanogenesis and anaerobic methane oxidation. Catalyzes the ATP-dependent amidation of the two carboxylate groups at positions a and c of Ni-sirohydrochlorin, using L-glutamine or ammonia as the nitrogen source. The polypeptide is Cobyrinate a,c-diamide synthase (Methanococcus maripaludis (strain C5 / ATCC BAA-1333)).